The following is a 244-amino-acid chain: Uridylate kinase (244 aa).

17-20 (KVSG) lines the ATP pocket. Residues 25–30 (GDKGFG) are involved in allosteric activation by GTP. Gly-59 provides a ligand contact to UMP. The ATP site is built by Gly-60 and Arg-64. UMP is bound by residues Asp-80 and 141–148 (VGNPFFTT). ATP is bound by residues Thr-168, Gln-169, Tyr-174, and Asp-177.

The protein belongs to the UMP kinase family. Homohexamer.

Its subcellular location is the cytoplasm. It catalyses the reaction UMP + ATP = UDP + ADP. The protein operates within pyrimidine metabolism; CTP biosynthesis via de novo pathway; UDP from UMP (UMPK route): step 1/1. Its activity is regulated as follows. Allosterically activated by GTP. Inhibited by UTP. In terms of biological role, catalyzes the reversible phosphorylation of UMP to UDP. The protein is Uridylate kinase of Ehrlichia ruminantium (strain Welgevonden).